The primary structure comprises 288 residues: Phosphatidylserine decarboxylase proenzyme (288 aa).

Residues D90, H147, and S254 each act as charge relay system; for autoendoproteolytic cleavage activity in the active site. The Schiff-base intermediate with substrate; via pyruvic acid; for decarboxylase activity role is filled by S254. S254 carries the post-translational modification Pyruvic acid (Ser); by autocatalysis.

The protein belongs to the phosphatidylserine decarboxylase family. PSD-B subfamily. Prokaryotic type I sub-subfamily. In terms of assembly, heterodimer of a large membrane-associated beta subunit and a small pyruvoyl-containing alpha subunit. The cofactor is pyruvate. Post-translationally, is synthesized initially as an inactive proenzyme. Formation of the active enzyme involves a self-maturation process in which the active site pyruvoyl group is generated from an internal serine residue via an autocatalytic post-translational modification. Two non-identical subunits are generated from the proenzyme in this reaction, and the pyruvate is formed at the N-terminus of the alpha chain, which is derived from the carboxyl end of the proenzyme. The autoendoproteolytic cleavage occurs by a canonical serine protease mechanism, in which the side chain hydroxyl group of the serine supplies its oxygen atom to form the C-terminus of the beta chain, while the remainder of the serine residue undergoes an oxidative deamination to produce ammonia and the pyruvoyl prosthetic group on the alpha chain. During this reaction, the Ser that is part of the protease active site of the proenzyme becomes the pyruvoyl prosthetic group, which constitutes an essential element of the active site of the mature decarboxylase.

The protein resides in the cell membrane. It catalyses the reaction a 1,2-diacyl-sn-glycero-3-phospho-L-serine + H(+) = a 1,2-diacyl-sn-glycero-3-phosphoethanolamine + CO2. The protein operates within phospholipid metabolism; phosphatidylethanolamine biosynthesis; phosphatidylethanolamine from CDP-diacylglycerol: step 2/2. Catalyzes the formation of phosphatidylethanolamine (PtdEtn) from phosphatidylserine (PtdSer). This chain is Phosphatidylserine decarboxylase proenzyme, found in Hamiltonella defensa subsp. Acyrthosiphon pisum (strain 5AT).